Consider the following 163-residue polypeptide: Late embryogenesis abundant protein Dc3 (163 aa).

Disordered regions lie at residues 1-117 (MASH…GGLM) and 139-163 (FGMA…ARTE). Basic and acidic residues-rich tracts occupy residues 28–56 (TMKD…ESKD), 67–84 (GAVK…KEKT), and 91–113 (TKEK…KEKT). 6 tandem repeats follow at residues 32 to 42 (KAQAAKDKASE), 43 to 53 (MAGSARDRTVE), 65 to 75 (KAGAVKDKTCE), 76 to 86 (TAQAAKEKTGG), 87 to 97 (AMQATKEKASE), and 103 to 115 (KETA…KTGG). The segment at 32–115 (KAQAAKDKAS…AVAGKEKTGG (84 aa)) is 6 X 11 AA approximate repeats. The span at 152-163 (TTRVTRSSARTE) shows a compositional bias: low complexity.

Belongs to the LEA type 4 family.

The polypeptide is Late embryogenesis abundant protein Dc3 (Daucus carota (Wild carrot)).